Consider the following 130-residue polypeptide: Capsid protein (130 aa).

The segment at 32 to 105 (EWISSNSRSQ…FATNSDCELI (74 aa)) is viral RNA-binding.

It belongs to the Leviviricetes capsid protein family. Homodimer. The capsid proteins form dimers that assemble by group of 5. Twelve such pentamers are linked together with free dimers. The homodimers binds to the viral RNA via an operator hairpin, but also to many other RNA sequences in the viral genome; this interaction probably shifts the virus from the replicative to the assembly phase and ensures specific encapsidation of the viral genome.

The protein resides in the virion. In terms of biological role, capsid protein self-assembles to form an icosahedral capsid with a T=3 symmetry, about 26 nm in diameter, and consisting of 89 capsid proteins dimers (178 capsid proteins). Involved in viral genome encapsidation through the interaction between a capsid protein dimer and the multiple packaging signals present in the RNA genome. The capsid also contains 1 copy of the A2 maturation protein. Acts as a translational repressor of viral replicase synthesis late in infection. This latter function is the result of capsid protein interaction with an RNA hairpin which contains the replicase ribosome-binding site. This Escherichia coli (Bacteriophage MS2) protein is Capsid protein.